A 335-amino-acid chain; its full sequence is MAPEINTKLTVPVHSATGGEKRAYVTFLAGTGDYVKGVVGLAKGLRKAKSKYPLVVAVLPDVPEDHRKQLVDQGCVVKEIEPVYPPENQTEFAMAYYVINYSKLRIWEFVEYNKMIYLDGDIQVFDNIDHLFDLPNGQFYAVMDCFCEKTWSHSPQYKIGYCQQCPDKVTWPEAKLGPKPPLYFNAGMFVYEPNLSTYHNLLETVKIVPPTLFAEQDFLNMYFKDIYKPIPPVYNLVLAMLWRHPENIELDQVKVVHYCAAGAKPWRFTGEEENMDREDIKMLVKKWWDIYNDESLDYKNVVIGDSHKKQQTLQQFIEALSEAGALQYVKAPSAA.

Residue lysine 103 is part of the active site. Aspartate 119, aspartate 121, and histidine 257 together coordinate Mn(2+).

It belongs to the glycosyltransferase 8 family. Galactosyltransferase subfamily. The cofactor is a divalent metal cation. Accumulates in mature seeds.

The protein localises to the cytoplasm. The catalysed reaction is myo-inositol + UDP-alpha-D-galactose = alpha-D-galactosyl-(1-&gt;3)-1D-myo-inositol + UDP + H(+). In terms of biological role, galactinol synthase involved in the biosynthesis of raffinose family oligosaccharides (RFOs) that function as osmoprotectants. Promotes stress tolerance of factors such as drought, chilling, salinity and methylviologen (MV), a superoxide radical generating drug, by mediating an increase in levels of the endogenous osmoprotective compounds, galactinol and raffinose. The chain is Galactinol synthase 2 (GOLS2) from Arabidopsis thaliana (Mouse-ear cress).